An 862-amino-acid polypeptide reads, in one-letter code: Cadherin-related family member 5 (862 aa).

Residues 1–28 form the signal peptide; the sequence is MGAPALLWPPLLLPLLTVLFGHLPGTLA. The Extracellular segment spans residues 29–671; it reads QAQVCSANQT…GQRFSTVDMA (643 aa). N-linked (GlcNAc...) asparagine glycosylation is found at Asn36, Asn45, Asn135, Asn173, Asn201, Asn311, Asn408, Asn438, and Asn479. 4 Cadherin domains span residues 40-127, 128-240, 252-357, and 358-462; these read FTMN…APEF, PFTI…TPWF, IQAQ…PLQF, and SQSL…PPST. A disordered region spans residues 452-658; the sequence is IQVSEREPPS…TTGPISGVGE (207 aa). A compositionally biased stretch (low complexity) spans 461–500; the sequence is STESPTPPEAGGTTGPSSNTTLETPSTSGTSQGPATTSSG. The span at 529–652 shows a compositional bias: polar residues; it reads LGISTSPQTA…GTSQPTTTGP (124 aa). Tandem repeats lie at residues 545-575, 576-606, and 607-636. The segment at 545-648 is 4 X 31 AA approximate tandem repeats; that stretch reads TQTPKPGTSQ…TPKPGTSQPT (104 aa). A 4; truncated repeat occupies 637-648; the sequence is TQTPKPGTSQPT. Residues 672-692 form a helical membrane-spanning segment; sequence VLGGVLGALLLLALIFLIILI. The Cytoplasmic portion of the chain corresponds to 693 to 862; that stretch reads HKHYRHRFTC…LGAVADNTYV (170 aa). Positions 693-862 are mediates interaction with USH1C and MYO7B and is required for proper localization to microvilli tips and function in microvilli organization; that stretch reads HKHYRHRFTC…LGAVADNTYV (170 aa). Disordered stretches follow at residues 706 to 803 and 821 to 862; these read KAKE…EGGY and LNEP…NTYV. Ser729, Ser751, and Ser755 each carry phosphoserine. Residues 739-768 show a composition bias toward pro residues; the sequence is GPEPVQPPLRPPSPMSSSPTPPSSMPPSPQ. Thr758 carries the post-translational modification Phosphothreonine. A phosphoserine mark is found at Ser766 and Ser783. A compositionally biased stretch (basic and acidic residues) spans 791-801; it reads LTKERRPEGEG. The residue at position 825 (Thr825) is a Phosphothreonine. The span at 827-837 shows a compositional bias: low complexity; the sequence is DVDSASASGSE. A phosphoserine mark is found at Ser832, Ser834, and Ser836.

In terms of assembly, part of the IMAC/intermicrovillar adhesion complex/intermicrovillar tip-link complex composed of ANKS4B, MYO7B, USH1C, CDHR2 and CDHR5. Interacts (via cytoplasmic domain) with USH1C and MYO7B; required for proper localization of CDHR5 to microvilli tips and its function in brush border differentiation. Post-translationally, N- and O-glycosylated. As to expression, expressed predominantly in kidney. Also detected in lung and small intestine.

It localises to the apical cell membrane. The protein localises to the cell projection. It is found in the microvillus membrane. In terms of biological role, intermicrovillar adhesion molecule that forms, via its extracellular domain, calcium-dependent heterophilic complexes with CDHR2 on adjacent microvilli. Thereby, controls the packing of microvilli at the apical membrane of epithelial cells. Through its cytoplasmic domain, interacts with microvillus cytoplasmic proteins to form the intermicrovillar adhesion complex/IMAC. This complex plays a central role in microvilli and epithelial brush border differentiation. The chain is Cadherin-related family member 5 from Rattus norvegicus (Rat).